The sequence spans 218 residues: Oxidative stress regulator AosR (218 aa).

The CXXXC signature appears at 5-9 (CGRRC). C5 and C9 are disulfide-bonded.

Belongs to the AosR family. As to quaternary structure, homodimer. Under oxidative stress, interacts with the extracytoplasmic-function (ECF) RNA polymerase sigma factor SigH.

With respect to regulation, activity is modulated by the formation of a disulfide bound within the N-terminal Cys-X-X-X-Cys (CXXXC) motif. This intramolecular disulfide bond is formed in response to oxidative stress, and results in oxidative stress-dependent interaction with the sigma factor SigH. Its function is as follows. Transcription factor crucial for intra-mycobacterial redox homeostasis and protection against host-derived oxidative and nitrosative radicals. In response to oxidative stress, interacts with the ECF sigma factor SigH and, in conjunction with SigH, binds to an auxiliary promoter upstream of mec-cysO-cysM, leading to the transcriptional activation of these genes encoding a non-canonical actinomycete-specific cysteine biosynthesis pathway. Increased transcription of mec-cysO-cysM results in enhanced production of L-cysteine and cysteine-derived antioxidant molecules. Increased production of cysteine protects mycobacteria cells from host phagocyte-derived oxidative and nitrosative stress, thus facilitating the mycobacterial growth in the host. The chain is Oxidative stress regulator AosR from Mycobacterium bovis (strain ATCC BAA-935 / AF2122/97).